The following is a 328-amino-acid chain: D-cysteine desulfhydrase (328 aa).

Lys51 is modified (N6-(pyridoxal phosphate)lysine).

Belongs to the ACC deaminase/D-cysteine desulfhydrase family. As to quaternary structure, homodimer. Pyridoxal 5'-phosphate is required as a cofactor.

The enzyme catalyses D-cysteine + H2O = hydrogen sulfide + pyruvate + NH4(+) + H(+). Catalyzes the alpha,beta-elimination reaction of D-cysteine and of several D-cysteine derivatives. It could be a defense mechanism against D-cysteine. The chain is D-cysteine desulfhydrase from Klebsiella pneumoniae (strain 342).